A 185-amino-acid polypeptide reads, in one-letter code: Probable RNA 2'-phosphotransferase (185 aa).

Belongs to the KptA/TPT1 family.

Removes the 2'-phosphate from RNA via an intermediate in which the phosphate is ADP-ribosylated by NAD followed by a presumed transesterification to release the RNA and generate ADP-ribose 1''-2''-cyclic phosphate (APPR&gt;P). May function as an ADP-ribosylase. This Bacillus thuringiensis subsp. konkukian (strain 97-27) protein is Probable RNA 2'-phosphotransferase.